The following is a 181-amino-acid chain: Isopentenyl-diphosphate Delta-isomerase (181 aa).

Mn(2+)-binding residues include histidine 24 and histidine 30. In terms of domain architecture, Nudix hydrolase spans 28-168 (LLHLAFSVLL…PDTFSVWFPT (141 aa)). Cysteine 68 is an active-site residue. Cysteine 68 is a Mg(2+) binding site. Histidine 70 provides a ligand contact to Mn(2+). Glutamate 88 serves as a coordination point for Mg(2+). Mn(2+) contacts are provided by glutamate 117 and glutamate 119. Glutamate 119 is a catalytic residue.

The protein belongs to the IPP isomerase type 1 family. The cofactor is Mg(2+). Mn(2+) serves as cofactor.

It is found in the cytoplasm. The catalysed reaction is isopentenyl diphosphate = dimethylallyl diphosphate. It functions in the pathway isoprenoid biosynthesis; dimethylallyl diphosphate biosynthesis; dimethylallyl diphosphate from isopentenyl diphosphate: step 1/1. In terms of biological role, catalyzes the 1,3-allylic rearrangement of the homoallylic substrate isopentenyl (IPP) to its highly electrophilic allylic isomer, dimethylallyl diphosphate (DMAPP). The protein is Isopentenyl-diphosphate Delta-isomerase of Aliivibrio fischeri (strain ATCC 700601 / ES114) (Vibrio fischeri).